The primary structure comprises 598 residues: UvrABC system protein C (598 aa).

The GIY-YIG domain occupies 14–91; the sequence is DSPGCYLHKD…IQKNMPKYNI (78 aa). One can recognise a UVR domain in the interval 196–231; the sequence is DKIIEDLRSKMLAASEEMAFERAAEYRDLISGIATM.

It belongs to the UvrC family. Interacts with UvrB in an incision complex.

It localises to the cytoplasm. The UvrABC repair system catalyzes the recognition and processing of DNA lesions. UvrC both incises the 5' and 3' sides of the lesion. The N-terminal half is responsible for the 3' incision and the C-terminal half is responsible for the 5' incision. The chain is UvrABC system protein C from Streptococcus pyogenes serotype M18 (strain MGAS8232).